Consider the following 142-residue polypeptide: SLSDKDKAAVKALWSKIGKSADAIGNDALSRMIVVYPQTKTYFSHWPSVTPGHPDIKAHGKKVMGGLAIAVSKINDLKAGLSNLSQQHAYKLRVDPANFKILNHCILVVISTMFPKNFTPQAHVSLNKFLSGVALALAQRYR.

S1 bears the N-acetylserine mark. The Globin domain occupies 1-142 (SLSDKDKAAV…VALALAQRYR (142 aa)). O2 is bound at residue H59. H88 contacts heme b.

It belongs to the globin family. In terms of assembly, hb1 is a heterotetramer of two alpha-2 chains and two beta chains. Red blood cells.

Involved in oxygen transport from gills to the various peripheral tissues. The polypeptide is Hemoglobin subunit alpha-1 (hba1) (Notothenia neglecta (Yellowbelly rockcod)).